The primary structure comprises 723 residues: 1,3-beta-galactosyl-N-acetylhexosamine phosphorylase Cphy0577 (723 aa).

Asp317 serves as the catalytic Proton donor.

It belongs to the glycoside hydrolase 112 family.

It catalyses the reaction beta-D-galactosyl-(1-&gt;3)-N-acetyl-D-glucosamine + phosphate = alpha-D-galactose 1-phosphate + N-acetyl-D-glucosamine. In terms of biological role, reversibly phosphorolyzes beta-D-galactopyranosyl-(1-&gt;3)-N-acetyl-D-glucosamine to form alpha-D-galactopyranose 1-phosphate and acetyl-D-glucosamine. Active towards galacto-N-biose and lacto-N-biose. Does not phosphorolyze galacto-N-tetraose or lacto-N-tetraose. In the reverse reaction has activity toward N-acetyl-D-glucosamine and N-acetyl-D-galactosamine, but not L-rhamnose, D-glucose or D-galactose. This chain is 1,3-beta-galactosyl-N-acetylhexosamine phosphorylase Cphy0577, found in Lachnoclostridium phytofermentans (strain ATCC 700394 / DSM 18823 / ISDg) (Clostridium phytofermentans).